The chain runs to 412 residues: Adenylosuccinate synthetase (412 aa).

Residues 12–18 and 40–42 contribute to the GTP site; these read GDEGKGK and GHE. Asp-13 (proton acceptor) is an active-site residue. Mg(2+)-binding residues include Asp-13 and Gly-40. Residues 13 to 16, 38 to 41, Arg-134, Asn-212, Thr-227, and Arg-291 each bind IMP; these read DEGK and NAGH. The Proton donor role is filled by His-41. 287–293 contacts substrate; sequence TSTGRRR. Residues Arg-293, 318–320, and 400–402 contribute to the GTP site; these read KLD and GTG.

It belongs to the adenylosuccinate synthetase family. As to quaternary structure, homodimer. It depends on Mg(2+) as a cofactor.

It localises to the cytoplasm. It carries out the reaction IMP + L-aspartate + GTP = N(6)-(1,2-dicarboxyethyl)-AMP + GDP + phosphate + 2 H(+). Its pathway is purine metabolism; AMP biosynthesis via de novo pathway; AMP from IMP: step 1/2. In terms of biological role, plays an important role in the de novo pathway and in the salvage pathway of purine nucleotide biosynthesis. Catalyzes the first committed step in the biosynthesis of AMP from IMP. The polypeptide is Adenylosuccinate synthetase (Fusarium vanettenii (strain ATCC MYA-4622 / CBS 123669 / FGSC 9596 / NRRL 45880 / 77-13-4) (Fusarium solani subsp. pisi)).